The sequence spans 191 residues: A-type ATP synthase subunit E (191 aa).

It belongs to the V-ATPase E subunit family. Has multiple subunits with at least A(3), B(3), C, D, E, F, H, I and proteolipid K(x).

The protein localises to the cell membrane. In terms of biological role, component of the A-type ATP synthase that produces ATP from ADP in the presence of a proton gradient across the membrane. This chain is A-type ATP synthase subunit E, found in Methanoregula boonei (strain DSM 21154 / JCM 14090 / 6A8).